The primary structure comprises 350 residues: UDP-N-acetylglucosamine--N-acetylmuramyl-(pentapeptide) pyrophosphoryl-undecaprenol N-acetylglucosamine transferase (350 aa).

UDP-N-acetyl-alpha-D-glucosamine is bound by residues 9 to 11, asparagine 123, arginine 159, serine 181, and glutamine 281; that span reads TGG.

This sequence belongs to the glycosyltransferase 28 family. MurG subfamily.

The protein localises to the cell inner membrane. It carries out the reaction di-trans,octa-cis-undecaprenyl diphospho-N-acetyl-alpha-D-muramoyl-L-alanyl-D-glutamyl-meso-2,6-diaminopimeloyl-D-alanyl-D-alanine + UDP-N-acetyl-alpha-D-glucosamine = di-trans,octa-cis-undecaprenyl diphospho-[N-acetyl-alpha-D-glucosaminyl-(1-&gt;4)]-N-acetyl-alpha-D-muramoyl-L-alanyl-D-glutamyl-meso-2,6-diaminopimeloyl-D-alanyl-D-alanine + UDP + H(+). It participates in cell wall biogenesis; peptidoglycan biosynthesis. Its function is as follows. Cell wall formation. Catalyzes the transfer of a GlcNAc subunit on undecaprenyl-pyrophosphoryl-MurNAc-pentapeptide (lipid intermediate I) to form undecaprenyl-pyrophosphoryl-MurNAc-(pentapeptide)GlcNAc (lipid intermediate II). This is UDP-N-acetylglucosamine--N-acetylmuramyl-(pentapeptide) pyrophosphoryl-undecaprenol N-acetylglucosamine transferase from Helicobacter hepaticus (strain ATCC 51449 / 3B1).